Here is a 365-residue protein sequence, read N- to C-terminus: tRNA/tmRNA (uracil-C(5))-methyltransferase (365 aa).

Q189, Y217, N222, E238, and D298 together coordinate S-adenosyl-L-methionine. The Nucleophile role is filled by C323. The Proton acceptor role is filled by E357.

Belongs to the class I-like SAM-binding methyltransferase superfamily. RNA M5U methyltransferase family. TrmA subfamily.

It catalyses the reaction uridine(54) in tRNA + S-adenosyl-L-methionine = 5-methyluridine(54) in tRNA + S-adenosyl-L-homocysteine + H(+). The enzyme catalyses uridine(341) in tmRNA + S-adenosyl-L-methionine = 5-methyluridine(341) in tmRNA + S-adenosyl-L-homocysteine + H(+). Its function is as follows. Dual-specificity methyltransferase that catalyzes the formation of 5-methyluridine at position 54 (m5U54) in all tRNAs, and that of position 341 (m5U341) in tmRNA (transfer-mRNA). This Saccharophagus degradans (strain 2-40 / ATCC 43961 / DSM 17024) protein is tRNA/tmRNA (uracil-C(5))-methyltransferase.